The primary structure comprises 122 residues: Large ribosomal subunit protein eL34 (122 aa).

It belongs to the eukaryotic ribosomal protein eL34 family.

This is Large ribosomal subunit protein eL34 (rpl34) from Dictyostelium discoideum (Social amoeba).